A 167-amino-acid polypeptide reads, in one-letter code: Phosphopantetheine adenylyltransferase (167 aa).

Serine 10 is a binding site for substrate. ATP contacts are provided by residues 10 to 11 (SF) and histidine 18. Residues lysine 42, alanine 79, and arginine 93 each contribute to the substrate site. Residues 94-96 (GLR), glutamate 104, and 129-135 (VRHITAT) contribute to the ATP site.

It belongs to the bacterial CoaD family. In terms of assembly, homohexamer. Mg(2+) serves as cofactor.

The protein localises to the cytoplasm. It catalyses the reaction (R)-4'-phosphopantetheine + ATP + H(+) = 3'-dephospho-CoA + diphosphate. It functions in the pathway cofactor biosynthesis; coenzyme A biosynthesis; CoA from (R)-pantothenate: step 4/5. Functionally, reversibly transfers an adenylyl group from ATP to 4'-phosphopantetheine, yielding dephospho-CoA (dPCoA) and pyrophosphate. This is Phosphopantetheine adenylyltransferase from Beijerinckia indica subsp. indica (strain ATCC 9039 / DSM 1715 / NCIMB 8712).